Here is a 125-residue protein sequence, read N- to C-terminus: Translation initiation factor 5A (125 aa).

Hypusine is present on Lys-35.

The protein belongs to the eIF-5A family.

It is found in the cytoplasm. Functions by promoting the formation of the first peptide bond. This is Translation initiation factor 5A (eIF5A) from Methanoregula boonei (strain DSM 21154 / JCM 14090 / 6A8).